A 155-amino-acid polypeptide reads, in one-letter code: 6,7-dimethyl-8-ribityllumazine synthase (155 aa).

5-amino-6-(D-ribitylamino)uracil contacts are provided by residues F24, 58-60 (AFE), and 82-84 (AII). Residue 87 to 88 (AT) coordinates (2S)-2-hydroxy-3-oxobutyl phosphate. H90 functions as the Proton donor in the catalytic mechanism. F115 serves as a coordination point for 5-amino-6-(D-ribitylamino)uracil. Residue R129 participates in (2S)-2-hydroxy-3-oxobutyl phosphate binding.

The protein belongs to the DMRL synthase family.

It carries out the reaction (2S)-2-hydroxy-3-oxobutyl phosphate + 5-amino-6-(D-ribitylamino)uracil = 6,7-dimethyl-8-(1-D-ribityl)lumazine + phosphate + 2 H2O + H(+). It participates in cofactor biosynthesis; riboflavin biosynthesis; riboflavin from 2-hydroxy-3-oxobutyl phosphate and 5-amino-6-(D-ribitylamino)uracil: step 1/2. Functionally, catalyzes the formation of 6,7-dimethyl-8-ribityllumazine by condensation of 5-amino-6-(D-ribitylamino)uracil with 3,4-dihydroxy-2-butanone 4-phosphate. This is the penultimate step in the biosynthesis of riboflavin. This Prosthecochloris aestuarii (strain DSM 271 / SK 413) protein is 6,7-dimethyl-8-ribityllumazine synthase.